Consider the following 335-residue polypeptide: Acetyl-coenzyme A carboxylase carboxyl transferase subunit alpha (335 aa).

The region spanning 48–308 (VLESKVDALR…KSLLVEELRM (261 aa)) is the CoA carboxyltransferase C-terminal domain.

It belongs to the AccA family. Acetyl-CoA carboxylase is a heterohexamer composed of biotin carboxyl carrier protein (AccB), biotin carboxylase (AccC) and two subunits each of ACCase subunit alpha (AccA) and ACCase subunit beta (AccD).

It localises to the cytoplasm. The enzyme catalyses N(6)-carboxybiotinyl-L-lysyl-[protein] + acetyl-CoA = N(6)-biotinyl-L-lysyl-[protein] + malonyl-CoA. It functions in the pathway lipid metabolism; malonyl-CoA biosynthesis; malonyl-CoA from acetyl-CoA: step 1/1. Functionally, component of the acetyl coenzyme A carboxylase (ACC) complex. First, biotin carboxylase catalyzes the carboxylation of biotin on its carrier protein (BCCP) and then the CO(2) group is transferred by the carboxyltransferase to acetyl-CoA to form malonyl-CoA. The chain is Acetyl-coenzyme A carboxylase carboxyl transferase subunit alpha from Chlorobium phaeobacteroides (strain BS1).